Here is a 129-residue protein sequence, read N- to C-terminus: NADH-quinone oxidoreductase subunit A (129 aa).

3 helical membrane passes run 14-34, 67-87, and 95-115; these read LAIHVALSAGIVAAIIVVAAL, FLIAALFVIFDMEVAILFAWA, and WFGLIEAAVFIGVLLLALVYL.

It belongs to the complex I subunit 3 family. In terms of assembly, NDH-1 is composed of 14 different subunits. Subunits NuoA, H, J, K, L, M, N constitute the membrane sector of the complex.

It is found in the cell inner membrane. It catalyses the reaction a quinone + NADH + 5 H(+)(in) = a quinol + NAD(+) + 4 H(+)(out). In terms of biological role, NDH-1 shuttles electrons from NADH, via FMN and iron-sulfur (Fe-S) centers, to quinones in the respiratory chain. The immediate electron acceptor for the enzyme in this species is believed to be ubiquinone. Couples the redox reaction to proton translocation (for every two electrons transferred, four hydrogen ions are translocated across the cytoplasmic membrane), and thus conserves the redox energy in a proton gradient. In Rhodopseudomonas palustris (strain HaA2), this protein is NADH-quinone oxidoreductase subunit A.